We begin with the raw amino-acid sequence, 142 residues long: Small ribosomal subunit protein uS12z (142 aa).

At P61 the chain carries Hydroxyproline.

It belongs to the universal ribosomal protein uS12 family.

In Arabidopsis thaliana (Mouse-ear cress), this protein is Small ribosomal subunit protein uS12z (RPS23A).